A 178-amino-acid chain; its full sequence is Acireductone dioxygenase (178 aa).

Fe(2+)-binding residues include histidine 100, histidine 102, glutamate 106, and histidine 145. Histidine 100, histidine 102, glutamate 106, and histidine 145 together coordinate Ni(2+).

The protein belongs to the acireductone dioxygenase (ARD) family. As to quaternary structure, monomer. It depends on Fe(2+) as a cofactor. Ni(2+) serves as cofactor.

The enzyme catalyses 1,2-dihydroxy-5-(methylsulfanyl)pent-1-en-3-one + O2 = 3-(methylsulfanyl)propanoate + CO + formate + 2 H(+). It catalyses the reaction 1,2-dihydroxy-5-(methylsulfanyl)pent-1-en-3-one + O2 = 4-methylsulfanyl-2-oxobutanoate + formate + 2 H(+). It functions in the pathway amino-acid biosynthesis; L-methionine biosynthesis via salvage pathway; L-methionine from S-methyl-5-thio-alpha-D-ribose 1-phosphate: step 5/6. Catalyzes 2 different reactions between oxygen and the acireductone 1,2-dihydroxy-3-keto-5-methylthiopentene (DHK-MTPene) depending upon the metal bound in the active site. Fe-containing acireductone dioxygenase (Fe-ARD) produces formate and 2-keto-4-methylthiobutyrate (KMTB), the alpha-ketoacid precursor of methionine in the methionine recycle pathway. Ni-containing acireductone dioxygenase (Ni-ARD) produces methylthiopropionate, carbon monoxide and formate, and does not lie on the methionine recycle pathway. The protein is Acireductone dioxygenase (mtnD) of Bacillus subtilis (strain 168).